We begin with the raw amino-acid sequence, 273 residues long: Dermonecrotic toxin LhSicTox-alphaIA2ai (273 aa).

Residue histidine 5 is part of the active site. The Mg(2+) site is built by glutamate 25 and aspartate 27. Histidine 41 serves as the catalytic Nucleophile. 2 disulfides stabilise this stretch: cysteine 45-cysteine 51 and cysteine 47-cysteine 190. Mg(2+) is bound at residue aspartate 85.

It belongs to the arthropod phospholipase D family. Class II subfamily. Requires Mg(2+) as cofactor. As to expression, expressed by the venom gland.

The protein resides in the secreted. The enzyme catalyses an N-(acyl)-sphingosylphosphocholine = an N-(acyl)-sphingosyl-1,3-cyclic phosphate + choline. The catalysed reaction is an N-(acyl)-sphingosylphosphoethanolamine = an N-(acyl)-sphingosyl-1,3-cyclic phosphate + ethanolamine. It carries out the reaction a 1-acyl-sn-glycero-3-phosphocholine = a 1-acyl-sn-glycero-2,3-cyclic phosphate + choline. It catalyses the reaction a 1-acyl-sn-glycero-3-phosphoethanolamine = a 1-acyl-sn-glycero-2,3-cyclic phosphate + ethanolamine. Dermonecrotic toxins cleave the phosphodiester linkage between the phosphate and headgroup of certain phospholipids (sphingolipid and lysolipid substrates), forming an alcohol (often choline) and a cyclic phosphate. This toxin acts on sphingomyelin (SM). It may also act on ceramide phosphoethanolamine (CPE), lysophosphatidylcholine (LPC) and lysophosphatidylethanolamine (LPE), but not on lysophosphatidylserine (LPS), and lysophosphatidylglycerol (LPG). It acts by transphosphatidylation, releasing exclusively cyclic phosphate products as second products. Induces dermonecrosis, hemolysis, increased vascular permeability, edema, inflammatory response, and platelet aggregation. The polypeptide is Dermonecrotic toxin LhSicTox-alphaIA2ai (Loxosceles hirsuta (Recluse spider)).